We begin with the raw amino-acid sequence, 79 residues long: Protein SNA2 (79 aa).

Residues 1–6 (MHARDW) lie on the Cytoplasmic side of the membrane. A helical transmembrane segment spans residues 7–27 (FLVFIAIFIPPLAVWLKRGFF). Residues 28 to 32 (TKDLL) are Vesicular-facing. A helical transmembrane segment spans residues 33–53 (INFLLFLLGFFPGLIHALYVI). At 54-79 (SCHPYEENEARYSHLSSSDDNYGSLA) the chain is on the cytoplasmic side. Residues S71 and S77 each carry the phosphoserine modification.

Belongs to the UPF0057 (PMP3) family.

The protein localises to the membrane. It localises to the lipid droplet. This is Protein SNA2 (SNA2) from Saccharomyces cerevisiae (strain ATCC 204508 / S288c) (Baker's yeast).